Consider the following 100-residue polypeptide: Small ribosomal subunit protein uS14c (100 aa).

This sequence belongs to the universal ribosomal protein uS14 family. Part of the 30S ribosomal subunit.

It is found in the plastid. The protein resides in the chloroplast. In terms of biological role, binds 16S rRNA, required for the assembly of 30S particles. The chain is Small ribosomal subunit protein uS14c from Phalaenopsis aphrodite subsp. formosana (Moth orchid).